Reading from the N-terminus, the 490-residue chain is JNK-interacting protein 1 (490 aa).

Disordered stretches follow at residues 1–71 (MADS…DHEP) and 213–254 (EDSS…PVSQ). The span at 231 to 249 (GHSTAHSPNDFKSMSPQIT) shows a compositional bias: polar residues. The region spanning 271–332 (MLEATHRGLH…PSAYAVDLDY (62 aa)) is the SH3 domain. Residues 344 to 479 (KERYLLGYLG…FQRFYQKFIE (136 aa)) enclose the PID domain.

This sequence belongs to the JIP scaffold family. As to quaternary structure, forms homo- and heterooligomeric complexes. Binds Hep, a dual specificity protein kinase in the JNK pathway, but not its downstream target bsk. The C-terminal region interacts with the kinesin light chain protein, Klc, and the C-terminal PTY motif of amyloid-beta protein precursor-like protein, Appl. Expressed in the brain, CNS, PNS and cells posterior to the morphogenetic furrow in the eye imaginal disk of late embryos.

Its subcellular location is the cytoplasm. The JNK-interacting protein (JIP) group of scaffold proteins selectively mediates JNK signaling by aggregating specific components of the MAPK cascade to form a functional JNK signaling module. May function as a regulator of vesicle transport, through interactions with the JNK-signaling components and motor proteins. The chain is JNK-interacting protein 1 (Aplip1) from Drosophila melanogaster (Fruit fly).